The sequence spans 606 residues: Zinc metalloproteinase-disintegrin-like HF3 (606 aa).

Residues 1-20 form the signal peptide; the sequence is MIQVLLVTICLAAFPYQGSS. A propeptide spanning residues 21–190 is cleaved from the precursor; it reads IILESGNVND…KKASQLVVTA (170 aa). The region spanning 199 to 395 is the Peptidase M12B domain; the sequence is KYIELVILAD…YKPQCILNEP (197 aa). Glu202 is a Ca(2+) binding site. N-linked (GlcNAc...) asparagine glycosylation occurs at Asn259. Asp286 lines the Ca(2+) pocket. Disulfide bonds link Cys310/Cys390, Cys350/Cys374, and Cys352/Cys357. Residue Asn313 is glycosylated (N-linked (GlcNAc...) asparagine). His335 serves as a coordination point for Zn(2+). The active site involves Glu336. His339 and His345 together coordinate Zn(2+). Asn373 carries an N-linked (GlcNAc...) asparagine glycan. Positions 390, 393, 405, 408, 410, 412, 415, and 418 each coordinate Ca(2+). The Disintegrin domain maps to 403-489; sequence PPVCGNELLE…DCPTDDFKRN (87 aa). Disulfide bonds link Cys406-Cys435, Cys417-Cys430, Cys419-Cys425, Cys429-Cys452, Cys443-Cys449, Cys448-Cys474, Cys461-Cys481, Cys468-Cys500, Cys493-Cys505, Cys512-Cys562, Cys527-Cys569, Cys540-Cys550, Cys557-Cys594, and Cys588-Cys599. The D/ECD-tripeptide motif lies at 467 to 469; that stretch reads ECD. Positions 469, 472, and 484 each coordinate Ca(2+). Asn519 is a glycosylation site (N-linked (GlcNAc...) asparagine). The N-linked (GlcNAc...) asparagine glycan is linked to Asn584.

This sequence belongs to the venom metalloproteinase (M12B) family. P-III subfamily. P-IIIa sub-subfamily. In terms of assembly, monomer. Requires Zn(2+) as cofactor. Expressed by the venom gland.

It localises to the secreted. Functionally, the metalloproteinase-disintegrin-like HF3 is a potent hemorrhagic toxin that activates macrophages for phagocytosis through integrin alpha-M/beta-2 (ITGAM/ITGB2). It inhibits collagen-induced platelet aggregation. This protein shows cleavage specificity for substrate for leucine at P1' position, followed by hydrophobic residues in P2'. In Bothrops jararaca (Jararaca), this protein is Zinc metalloproteinase-disintegrin-like HF3.